The sequence spans 284 residues: Hypersensitive-induced response protein 1 (284 aa).

Gly-2 carries N-myristoyl glycine lipidation.

In terms of assembly, interacts with LRR1.

It is found in the cell membrane. Positive regulator of hypersensitive response (HR)-like cell death. May be involved in potassium ion channel regulation. The chain is Hypersensitive-induced response protein 1 from Oryza sativa subsp. japonica (Rice).